The primary structure comprises 245 residues: tRNA pseudouridine synthase A (245 aa).

D52 functions as the Nucleophile in the catalytic mechanism. Y111 provides a ligand contact to substrate.

This sequence belongs to the tRNA pseudouridine synthase TruA family. As to quaternary structure, homodimer.

It catalyses the reaction uridine(38/39/40) in tRNA = pseudouridine(38/39/40) in tRNA. Its function is as follows. Formation of pseudouridine at positions 38, 39 and 40 in the anticodon stem and loop of transfer RNAs. This chain is tRNA pseudouridine synthase A, found in Rickettsia peacockii (strain Rustic).